The primary structure comprises 145 residues: ATP synthase epsilon chain (145 aa).

This sequence belongs to the ATPase epsilon chain family. In terms of assembly, F-type ATPases have 2 components, CF(1) - the catalytic core - and CF(0) - the membrane proton channel. CF(1) has five subunits: alpha(3), beta(3), gamma(1), delta(1), epsilon(1). CF(0) has three main subunits: a, b and c.

The protein localises to the cell inner membrane. Produces ATP from ADP in the presence of a proton gradient across the membrane. The chain is ATP synthase epsilon chain from Francisella tularensis subsp. mediasiatica (strain FSC147).